The chain runs to 469 residues: Ribosomal protein uS12 methylthiotransferase RimO (469 aa).

The 115-residue stretch at 1-115 (MKFHIITLGC…IGSVVAGGVA (115 aa)) folds into the MTTase N-terminal domain. The [4Fe-4S] cluster site is built by C10, C46, C78, C180, C184, and C187. Residues 166 to 398 (NKRGPSAYLK…MAVQQVISRA (233 aa)) enclose the Radical SAM core domain. A TRAM domain is found at 401–469 (ARFVGQTMKV…TDYDLWGEIV (69 aa)).

It belongs to the methylthiotransferase family. RimO subfamily. It depends on [4Fe-4S] cluster as a cofactor.

The protein resides in the cytoplasm. It carries out the reaction L-aspartate(89)-[ribosomal protein uS12]-hydrogen + (sulfur carrier)-SH + AH2 + 2 S-adenosyl-L-methionine = 3-methylsulfanyl-L-aspartate(89)-[ribosomal protein uS12]-hydrogen + (sulfur carrier)-H + 5'-deoxyadenosine + L-methionine + A + S-adenosyl-L-homocysteine + 2 H(+). In terms of biological role, catalyzes the methylthiolation of an aspartic acid residue of ribosomal protein uS12. This Herpetosiphon aurantiacus (strain ATCC 23779 / DSM 785 / 114-95) protein is Ribosomal protein uS12 methylthiotransferase RimO.